The sequence spans 260 residues: Exosome complex component Rrp42 (260 aa).

The protein belongs to the RNase PH family. Rrp42 subfamily. As to quaternary structure, component of the archaeal exosome complex. Forms a hexameric ring-like arrangement composed of 3 Rrp41-Rrp42 heterodimers. The hexameric ring associates with a trimer of Rrp4 and/or Csl4 subunits.

It localises to the cytoplasm. Non-catalytic component of the exosome, which is a complex involved in RNA degradation. Contributes to the structuring of the Rrp41 active site. The polypeptide is Exosome complex component Rrp42 (Methanocella arvoryzae (strain DSM 22066 / NBRC 105507 / MRE50)).